We begin with the raw amino-acid sequence, 874 residues long: MKSAEIREAFLRFFEEQGHTRVASSSLIPNNDPTLLFTNAGMNQFKDCFLGAEKRAYTRAVSSQKCVRAGGKHNDLENVGYTARHHTFFEMLGNFSFGDYFKRDAITFAWTFLTSEQWLNLPKEKLWVTVYATDDEAYDIWTKEVGVPAERMVRIGDNKGAPYASDNFWTMGDTGPCGPCTEIFYDHGPDIWGGPPGSPEEDGDRYIEIWNNVFMQFNRTADGVLHPLPAPSVDTGMGLERVSAVLQHVHSNYEIDLFQNLLAAAAKAIGCSNDGQASLKVVADHIRSCGFLIADGVLPSNEGRGYVLRRIIRRACRHGNKLGAKGSFFYQIVAALAAEMGEAFPELKSQQAHIERVLKAEEEQFAKTLEQGLRILEQDLAQLKGDVVPGDVVFKLYDTYGFPMDLTADIARERELTIDEAGFEREMDAQRERARSASAFGMDYNSLVKVDSATEFLGYDATEAQGKIIALYKDGQAVDQLGEGEQGVVVLDRTPFYAESGGQVGDTGFLQAGAARFDVRDTTKTGGAFLHHGVVASGALVIGSPVEAKVDADVQHATSLNHSATHLLHEALRQVLGEHVQQKGSLVDSQRLRFDFSHFEALKPEQIKQLEDIVNREVRKNTAVETELTDIETAKAKGAMALFGEKYGDTVRVLSMGGDFSVELCGGIHAKRTGDISLFKIISEGGVASGVRRIEAVTGAAALAYLNAAEEQVKEAAQLVKGNRDNLIDKLSAVLERNRQLEKQLEQLQAKAASAAGDDLSNAAVEVKGAKVLAARLDGQDGKALLALVDQLKNKLGHAVILLGSEHEGKVVLVAGVTKDLSSQLKAGDLMKQAAAAVGGKGGGRPDMAQGGGVDVAALDQALALAVPFAEQGL.

Zn(2+) contacts are provided by H562, H566, C665, and H669.

The protein belongs to the class-II aminoacyl-tRNA synthetase family. The cofactor is Zn(2+).

Its subcellular location is the cytoplasm. The catalysed reaction is tRNA(Ala) + L-alanine + ATP = L-alanyl-tRNA(Ala) + AMP + diphosphate. Catalyzes the attachment of alanine to tRNA(Ala) in a two-step reaction: alanine is first activated by ATP to form Ala-AMP and then transferred to the acceptor end of tRNA(Ala). Also edits incorrectly charged Ser-tRNA(Ala) and Gly-tRNA(Ala) via its editing domain. This chain is Alanine--tRNA ligase, found in Pseudomonas putida (strain GB-1).